The sequence spans 422 residues: Carboxypeptidase B2 (422 aa).

A signal peptide spans 1 to 21; it reads MKLHGLGILVAIILYEQHGFA. Positions 22–113 are cleaved as a propeptide — activation peptide; it reads FQSGQVLSAL…QTFNDTVSPR (92 aa). N43, N72, N84, and N107 each carry an N-linked (GlcNAc...) asparagine glycan. A Peptidase M14 domain is found at 121 to 418; sequence QYHSLNEIYS…AAISKIVWHV (298 aa). Residues C177 and C190 are joined by a disulfide bond. Positions 180 and 183 each coordinate Zn(2+). Substrate-binding positions include 180 to 183 and R238; that span reads HARE. N240 carries an N-linked (GlcNAc...) asparagine glycan. 2 cysteine pairs are disulfide-bonded: C249/C273 and C264/C278. 255-256 is a binding site for substrate; the sequence is NR. Zn(2+) is bound at residue H309. 310-311 provides a ligand contact to substrate; it reads SY. N322 is a glycosylation site (N-linked (GlcNAc...) asparagine). Y362 provides a ligand contact to substrate. E384 (proton donor/acceptor) is an active-site residue.

This sequence belongs to the peptidase M14 family. Zn(2+) serves as cofactor. As to expression, plasma; synthesized in the liver.

The protein localises to the secreted. It carries out the reaction Release of C-terminal Arg and Lys from a polypeptide.. With respect to regulation, TAFI/CPB2 is unique among carboxypeptidases in that it spontaneously inactivates with a short half-life, a property that is crucial for its role in controlling blood clot lysis. The zymogen is stabilized by interactions with the activation peptide. Release of the activation peptide increases a dynamic flap mobility and in time this leads to conformational changes that disrupt the catalytic site and expose a cryptic thrombin-cleavage site present at Arg-323. Cleaves C-terminal arginine or lysine residues from biologically active peptides such as kinins or anaphylatoxins in the circulation thereby regulating their activities. Down-regulates fibrinolysis by removing C-terminal lysine residues from fibrin that has already been partially degraded by plasmin. The polypeptide is Carboxypeptidase B2 (Cpb2) (Mus musculus (Mouse)).